The chain runs to 345 residues: Phosphoribosylformylglycinamidine cyclo-ligase (345 aa).

The protein belongs to the AIR synthase family.

The protein localises to the cytoplasm. The catalysed reaction is 2-formamido-N(1)-(5-O-phospho-beta-D-ribosyl)acetamidine + ATP = 5-amino-1-(5-phospho-beta-D-ribosyl)imidazole + ADP + phosphate + H(+). It participates in purine metabolism; IMP biosynthesis via de novo pathway; 5-amino-1-(5-phospho-D-ribosyl)imidazole from N(2)-formyl-N(1)-(5-phospho-D-ribosyl)glycinamide: step 2/2. The sequence is that of Phosphoribosylformylglycinamidine cyclo-ligase from Methanopyrus kandleri (strain AV19 / DSM 6324 / JCM 9639 / NBRC 100938).